Consider the following 172-residue polypeptide: Large ribosomal subunit protein uL10 (172 aa).

Belongs to the universal ribosomal protein uL10 family. Part of the ribosomal stalk of the 50S ribosomal subunit. The N-terminus interacts with L11 and the large rRNA to form the base of the stalk. The C-terminus forms an elongated spine to which L12 dimers bind in a sequential fashion forming a multimeric L10(L12)X complex.

Its function is as follows. Forms part of the ribosomal stalk, playing a central role in the interaction of the ribosome with GTP-bound translation factors. The chain is Large ribosomal subunit protein uL10 from Bartonella bacilliformis (strain ATCC 35685 / KC583 / Herrer 020/F12,63).